Here is a 635-residue protein sequence, read N- to C-terminus: Chaperone protein DnaK (635 aa).

Thr198 is modified (phosphothreonine; by autocatalysis). Residues 606–635 (QATAASPGAEAPKADDDVVDAEFSEVDENK) are disordered. Over residues 622 to 635 (DVVDAEFSEVDENK) the composition is skewed to acidic residues.

This sequence belongs to the heat shock protein 70 family.

Its function is as follows. Acts as a chaperone. This chain is Chaperone protein DnaK, found in Novosphingobium aromaticivorans (strain ATCC 700278 / DSM 12444 / CCUG 56034 / CIP 105152 / NBRC 16084 / F199).